The chain runs to 347 residues: 4-hydroxy-2-oxovalerate aldolase 1 (347 aa).

One can recognise a Pyruvate carboxyltransferase domain in the interval 13–265 (IRVTDTSLRD…KTGIDFFAIA (253 aa)). 21–22 (RD) contributes to the substrate binding site. Asp-22 contacts Mn(2+). His-25 acts as the Proton acceptor in catalysis. Residues Ser-175 and His-204 each coordinate substrate. Positions 204 and 206 each coordinate Mn(2+). A substrate-binding site is contributed by Tyr-295.

This sequence belongs to the 4-hydroxy-2-oxovalerate aldolase family.

The enzyme catalyses (S)-4-hydroxy-2-oxopentanoate = acetaldehyde + pyruvate. This chain is 4-hydroxy-2-oxovalerate aldolase 1, found in Rhodococcus erythropolis (strain PR4 / NBRC 100887).